The primary structure comprises 131 residues: MKLSDFIKTEDFKKEKHVPVIEAPEKVKKDEKVQIVVTVGKEIPHPNTTEHHIRWIKVFFQPDGDPYVYEVGRYEFNAHGESVQGPNIGAVYTEPTVTTVVKLNRSGTIIALSYCNIHGLWESSQKITVEE.

Residues Glu15, His17, His45, His51, Cys115, and His118 each contribute to the Fe cation site.

This sequence belongs to the desulfoferrodoxin family. The cofactor is Fe cation.

It carries out the reaction reduced [rubredoxin] + superoxide + 2 H(+) = oxidized [rubredoxin] + H2O2. Uses electrons from reduced NADP, by way of rubredoxin and an oxidoreductase, to catalyze the reduction of superoxide to hydrogen peroxide. The sequence is that of Putative superoxide reductase from Thermotoga maritima (strain ATCC 43589 / DSM 3109 / JCM 10099 / NBRC 100826 / MSB8).